The following is a 1382-amino-acid chain: Eukaryotic translation initiation factor 3 subunit A (1382 aa).

At Lys-68 the chain carries N6-acetyllysine. A coiled-coil region spans residues 82–120 (NIKSLEDVVRAYLKMAEEKTEAAKEESQQMVLDIEDLDN). Positions 315 to 498 (MQRMSTRVLL…RTLSFGSDLN (184 aa)) constitute a PCI domain. Phosphoserine is present on residues Ser-492 and Ser-584. An interaction with EIF3B region spans residues 664 to 835 (LDPDFIMAKQ…REERERAERA (172 aa)). Disordered stretches follow at residues 810-844 (KEEE…LREY) and 866-1382 (EERE…TVRR). Basic and acidic residues-rich tracts occupy residues 866 to 1165 (EERE…DDSR), 1177 to 1328 (GWRE…DPPR), and 1336 to 1371 (SRDR…TKNE). 3 positions are modified to phosphoserine: Ser-881, Ser-882, and Ser-895. Residues 925-934 (DEDRSHRRDE) form repeat 1. The 25 X 10 AA approximate tandem repeats of [DE]-[DE]-[DE]-R-[SEVGFPILV]-[HPSN]-[RSW]-[RL]-[DRGTIHN]-[EPMANLGDT] stretch occupies residues 925-1172 (DEDRSHRRDE…DSRPGPWRPL (248 aa)). A 2; truncated repeat occupies 935 to 942 (ERPRRLGD). 20 tandem repeats follow at residues 943–952 (DEDREPSLRP), 953–962 (DDDRVPRRGM), 963–972 (DDDRGPRRGP), 973–982 (EEDRFSRRGA), 983–992 (DDDRPSWRNT), 993–1002 (DDDRPPRRIA), 1003–1012 (DEDRGNWRHA), 1013–1022 (DDDRPPRRGL), 1023–1032 (DEDRGSWRTA), 1033–1042 (DEDRGPRRGM), 1043–1052 (DDDRGPRRGG), 1054–1063 (DDERSSWRNA), 1064–1073 (DDDRGPRRGL), 1074–1083 (DDDRGPRRGM), 1084–1093 (DDDRGPRRGM), 1094–1103 (DDDRGPRRGM), 1104–1113 (DDDRGPRRGL), 1114–1123 (DDDRGPWRNA), 1124–1133 (DDDRIPRRGA), and 1134–1143 (EDDRGPWRNM). Ser-949 bears the Phosphoserine mark. Ser-1028 carries the post-translational modification Phosphoserine. A 23; truncated repeat occupies 1144–1152 (DDDRLSRRA). Repeat 24 spans residues 1153–1162 (DDDRFPRRGD). One copy of the 25; approximate repeat lies at 1163–1172 (DSRPGPWRPL). Phosphoserine is present on residues Ser-1188, Ser-1198, Ser-1262, Ser-1336, and Ser-1364.

In terms of assembly, interacts with EIF4G1. Component of the eukaryotic translation initiation factor 3 (eIF-3) complex, which is composed of 13 subunits: EIF3A, EIF3B, EIF3C, EIF3D, EIF3E, EIF3F, EIF3G, EIF3H, EIF3I, EIF3J, EIF3K, EIF3L and EIF3M. The eIF-3 complex appears to include 3 stable modules: module A is composed of EIF3A, EIF3B, EIF3G and EIF3I; module B is composed of EIF3F, EIF3H, and EIF3M; and module C is composed of EIF3C, EIF3D, EIF3E, EIF3L and EIF3K. EIF3C of module C binds EIF3B of module A and EIF3H of module B, thereby linking the three modules. EIF3J is a labile subunit that binds to the eIF-3 complex via EIF3B. The eIF-3 complex interacts with RPS6KB1 under conditions of nutrient depletion. Mitogenic stimulation leads to binding and activation of a complex composed of MTOR and RPTOR, leading to phosphorylation and release of RPS6KB1 and binding of EIF4B to eIF-3. Also interacts with KRT7 and PIWIL2. Post-translationally, phosphorylated. Phosphorylation is enhanced upon serum stimulation.

It is found in the cytoplasm. In terms of biological role, RNA-binding component of the eukaryotic translation initiation factor 3 (eIF-3) complex, which is required for several steps in the initiation of protein synthesis. The eIF-3 complex associates with the 40S ribosome and facilitates the recruitment of eIF-1, eIF-1A, eIF-2:GTP:methionyl-tRNAi and eIF-5 to form the 43S pre-initiation complex (43S PIC). The eIF-3 complex stimulates mRNA recruitment to the 43S PIC and scanning of the mRNA for AUG recognition. The eIF-3 complex is also required for disassembly and recycling of post-termination ribosomal complexes and subsequently prevents premature joining of the 40S and 60S ribosomal subunits prior to initiation. The eIF-3 complex specifically targets and initiates translation of a subset of mRNAs involved in cell proliferation, including cell cycling, differentiation and apoptosis, and uses different modes of RNA stem-loop binding to exert either translational activation or repression. Its function is as follows. (Microbial infection) Essential for the initiation of translation on type-1 viral ribosomal entry sites (IRESs), like for HCV, PV, EV71 or BEV translation. (Microbial infection) In case of FCV infection, plays a role in the ribosomal termination-reinitiation event leading to the translation of VP2. The chain is Eukaryotic translation initiation factor 3 subunit A from Homo sapiens (Human).